The chain runs to 236 residues: Opacity protein opA50 (236 aa).

Residue alanine 1 is a signal peptide.

The protein belongs to the opacity porin family.

It is found in the cell outer membrane. Functionally, implicated in a number of adherence functions. OPA proteins are implicated in pathogenesis and are subject to phase variation. This Neisseria gonorrhoeae protein is Opacity protein opA50 (opaC).